A 177-amino-acid polypeptide reads, in one-letter code: Bifunctional protein PyrR (177 aa).

A PRPP-binding motif is present at residues 99–111 (VVLVDDVLFTGRT).

This sequence belongs to the purine/pyrimidine phosphoribosyltransferase family. PyrR subfamily.

It catalyses the reaction UMP + diphosphate = 5-phospho-alpha-D-ribose 1-diphosphate + uracil. Regulates the transcription of the pyrimidine nucleotide (pyr) operon in response to exogenous pyrimidines. Functionally, also displays a weak uracil phosphoribosyltransferase activity which is not physiologically significant. In Geobacter sp. (strain M21), this protein is Bifunctional protein PyrR.